A 552-amino-acid chain; its full sequence is 4-coumarate--CoA ligase-like 3 (552 aa).

Residues Ser-207, Ser-208, Gly-209, Thr-210, Thr-211, and Lys-215 each coordinate ATP. Phe-252 lines the (E)-4-coumaroyl-AMP pocket. A CoA-binding site is contributed by Arg-273. An SBD1 region spans residues 275–346 (GLDDMMQAVE…EKYPTVNIFQ (72 aa)). Residues Gly-324, Gln-346, Gly-347, and Thr-351 each contribute to the (E)-4-coumaroyl-AMP site. Residues Gln-346, Gly-347, Thr-351, Asp-432, and Arg-447 each coordinate ATP. An SBD2 region spans residues 347–411 (GYALTESHGS…LKGPSISKGY (65 aa)). (E)-4-coumaroyl-AMP is bound by residues Lys-449 and Lys-453. The CoA site is built by Lys-455 and Gly-456. Lys-538 contacts ATP. Positions 550 to 552 (SKL) match the Microbody targeting signal motif.

The protein belongs to the ATP-dependent AMP-binding enzyme family. Mg(2+) serves as cofactor.

It localises to the peroxisome. It carries out the reaction (E)-4-coumarate + ATP + CoA = (E)-4-coumaroyl-CoA + AMP + diphosphate. It catalyses the reaction (E)-4-coumarate + ATP + H(+) = (E)-4-coumaroyl-AMP + diphosphate. The enzyme catalyses (E)-4-coumaroyl-AMP + CoA = (E)-4-coumaroyl-CoA + AMP + H(+). Its function is as follows. Carboxylate--CoA ligase that may use 4-coumarate as substrate. Follows a two-step reaction mechanism, wherein the carboxylate substrate first undergoes adenylation by ATP, followed by a thioesterification in the presence of CoA to yield the final CoA thioester. This chain is 4-coumarate--CoA ligase-like 3, found in Arabidopsis thaliana (Mouse-ear cress).